A 170-amino-acid chain; its full sequence is Large ribosomal subunit protein uL10 (170 aa).

The protein belongs to the universal ribosomal protein uL10 family. As to quaternary structure, part of the ribosomal stalk of the 50S ribosomal subunit. The N-terminus interacts with L11 and the large rRNA to form the base of the stalk. The C-terminus forms an elongated spine to which L12 dimers bind in a sequential fashion forming a multimeric L10(L12)X complex.

Forms part of the ribosomal stalk, playing a central role in the interaction of the ribosome with GTP-bound translation factors. The protein is Large ribosomal subunit protein uL10 of Novosphingobium aromaticivorans (strain ATCC 700278 / DSM 12444 / CCUG 56034 / CIP 105152 / NBRC 16084 / F199).